We begin with the raw amino-acid sequence, 122 residues long: Holo-[acyl-carrier-protein] synthase (122 aa).

Mg(2+)-binding residues include Asp8 and Glu56.

This sequence belongs to the P-Pant transferase superfamily. AcpS family. It depends on Mg(2+) as a cofactor.

It is found in the cytoplasm. It carries out the reaction apo-[ACP] + CoA = holo-[ACP] + adenosine 3',5'-bisphosphate + H(+). Transfers the 4'-phosphopantetheine moiety from coenzyme A to a Ser of acyl-carrier-protein. The sequence is that of Holo-[acyl-carrier-protein] synthase from Alkaliphilus oremlandii (strain OhILAs) (Clostridium oremlandii (strain OhILAs)).